Here is a 227-residue protein sequence, read N- to C-terminus: 7-cyano-7-deazaguanine synthase (227 aa).

7 to 17 is an ATP binding site; the sequence is LSGGLDSSTIL. Zn(2+)-binding residues include C191, C199, C202, and C205.

The protein belongs to the QueC family. Zn(2+) is required as a cofactor.

The enzyme catalyses 7-carboxy-7-deazaguanine + NH4(+) + ATP = 7-cyano-7-deazaguanine + ADP + phosphate + H2O + H(+). Its pathway is purine metabolism; 7-cyano-7-deazaguanine biosynthesis. In terms of biological role, catalyzes the ATP-dependent conversion of 7-carboxy-7-deazaguanine (CDG) to 7-cyano-7-deazaguanine (preQ(0)). The protein is 7-cyano-7-deazaguanine synthase of Trichormus variabilis (strain ATCC 29413 / PCC 7937) (Anabaena variabilis).